Reading from the N-terminus, the 163-residue chain is Crossover junction endodeoxyribonuclease RuvC (163 aa).

Catalysis depends on residues Asp4, Glu65, and Asp138. The Mg(2+) site is built by Asp4, Glu65, and Asp138.

The protein belongs to the RuvC family. Homodimer which binds Holliday junction (HJ) DNA. The HJ becomes 2-fold symmetrical on binding to RuvC with unstacked arms; it has a different conformation from HJ DNA in complex with RuvA. In the full resolvosome a probable DNA-RuvA(4)-RuvB(12)-RuvC(2) complex forms which resolves the HJ. Requires Mg(2+) as cofactor.

The protein localises to the cytoplasm. The catalysed reaction is Endonucleolytic cleavage at a junction such as a reciprocal single-stranded crossover between two homologous DNA duplexes (Holliday junction).. Functionally, the RuvA-RuvB-RuvC complex processes Holliday junction (HJ) DNA during genetic recombination and DNA repair. Endonuclease that resolves HJ intermediates. Cleaves cruciform DNA by making single-stranded nicks across the HJ at symmetrical positions within the homologous arms, yielding a 5'-phosphate and a 3'-hydroxyl group; requires a central core of homology in the junction. The consensus cleavage sequence is 5'-(A/T)TT(C/G)-3'. Cleavage occurs on the 3'-side of the TT dinucleotide at the point of strand exchange. HJ branch migration catalyzed by RuvA-RuvB allows RuvC to scan DNA until it finds its consensus sequence, where it cleaves and resolves the cruciform DNA. In Corynebacterium diphtheriae (strain ATCC 700971 / NCTC 13129 / Biotype gravis), this protein is Crossover junction endodeoxyribonuclease RuvC.